The chain runs to 108 residues: uncharacterized protein (108 aa).

The segment at 81–108 is disordered; sequence TNHHQQQQNHQNQQQQQQQPNGIFENNI. The span at 83-99 shows a compositional bias: low complexity; the sequence is HHQQQQNHQNQQQQQQQ.

This is an uncharacterized protein from Dictyostelium discoideum (Social amoeba).